Here is a 299-residue protein sequence, read N- to C-terminus: Endonuclease 4 (299 aa).

A signal peptide spans 1–24 (MSSSLRQWFARVLVLTQLINGALC). A divalent metal cation is bound by residues W25 and H30. 25-30 (WGKEGH) provides a ligand contact to substrate. An intrachain disulfide couples C34 to C65. D69 and H84 together coordinate a divalent metal cation. Residues 69 to 75 (DEIKHHW), 84 to 87 (HYVD), and 94 to 99 (NYEYCR) contribute to the substrate site. 3 disulfide bridges follow: C93-C246, C101-C111, and C226-C233. Substrate contacts are provided by N118 and Y136. N118 carries N-linked (GlcNAc...) asparagine glycosylation. N137 is a glycosylation site (N-linked (GlcNAc...) asparagine). A divalent metal cation contacts are provided by H147, D151, H157, H181, and D185. The segment at 147–196 (HFIGDIHQPLHVGFLGDEGGNTITVRWYRRKTNLHHVWDNMIIESALKTY) is substrate binding. N-linked (GlcNAc...) asparagine glycans are attached at residues N198, N211, and N229. Positions 284–299 (ATLNRIFSSKPKHAGS) are cleaved as a propeptide — removed in mature form.

It belongs to the nuclease type I family. As to quaternary structure, monomer. Mn(2+) serves as cofactor. Ca(2+) is required as a cofactor.

It catalyses the reaction Endonucleolytic cleavage to 5'-phosphomononucleotide and 5'-phosphooligonucleotide end-products.. Functionally, endonuclease that can use single-stranded RNA and DNA as substrates. In contradiction with PubMed:23620482, cannot hydrolyze single-stranded DNA and does not cleave mismatches. This is Endonuclease 4 from Arabidopsis thaliana (Mouse-ear cress).